A 149-amino-acid polypeptide reads, in one-letter code: MKVIFLKDVKGKGKKGEIKNVADGYANNFLFKQGLAIEATPANLKALEAQKQKEQRQAAEELANAKKLKEQLEKLTVEIAAKAGEGGRLFGSITSKQIAEALQAQHGLKLDKRKIELNDAIRALGYTNVPVKLHPEVSATLKVHVTEQK.

The protein belongs to the bacterial ribosomal protein bL9 family.

Its function is as follows. Binds to the 23S rRNA. The protein is Large ribosomal subunit protein bL9 of Geobacillus thermodenitrificans (strain NG80-2).